We begin with the raw amino-acid sequence, 449 residues long: NADH-quinone oxidoreductase subunit H (449 aa).

9 consecutive transmembrane segments (helical) span residues 26–46, 96–116, 136–156, 177–197, 211–231, 259–279, 298–318, 330–350, and 365–385; these read FWLI…MTLF, PIFI…FAVI, LPVS…GLIL, IISY…YAGT, WYIA…GETN, FFFL…TTLF, WVPL…FIWL, FMAF…LVIA, and WLIG…LDPG. The interval 396-449 is disordered; sequence AERRKLAEAPSLESIPWPPPPPGGAHHRPAVPAGTSANGSSTVIPADPPPRQES.

The protein belongs to the complex I subunit 1 family. In terms of assembly, NDH-1 is composed of 14 different subunits. Subunits NuoA, H, J, K, L, M, N constitute the membrane sector of the complex.

Its subcellular location is the cell membrane. The enzyme catalyses a quinone + NADH + 5 H(+)(in) = a quinol + NAD(+) + 4 H(+)(out). Its function is as follows. NDH-1 shuttles electrons from NADH, via FMN and iron-sulfur (Fe-S) centers, to quinones in the respiratory chain. The immediate electron acceptor for the enzyme in this species is believed to be ubiquinone. Couples the redox reaction to proton translocation (for every two electrons transferred, four hydrogen ions are translocated across the cytoplasmic membrane), and thus conserves the redox energy in a proton gradient. This subunit may bind ubiquinone. The chain is NADH-quinone oxidoreductase subunit H from Frankia alni (strain DSM 45986 / CECT 9034 / ACN14a).